A 150-amino-acid chain; its full sequence is Large ribosomal subunit protein uL22c (150 aa).

This sequence belongs to the universal ribosomal protein uL22 family. In terms of assembly, part of the 50S ribosomal subunit.

The protein resides in the plastid. It localises to the chloroplast. Its function is as follows. This protein binds specifically to 23S rRNA. The globular domain of the protein is located near the polypeptide exit tunnel on the outside of the subunit, while an extended beta-hairpin is found that lines the wall of the exit tunnel in the center of the 70S ribosome. The sequence is that of Large ribosomal subunit protein uL22c (rpl22) from Fagopyrum esculentum subsp. ancestrale (Wild buckwheat).